A 466-amino-acid polypeptide reads, in one-letter code: 3-isopropylmalate dehydratase large subunit (466 aa).

Residues Cys347, Cys407, and Cys410 each contribute to the [4Fe-4S] cluster site.

Belongs to the aconitase/IPM isomerase family. LeuC type 1 subfamily. Heterodimer of LeuC and LeuD. The cofactor is [4Fe-4S] cluster.

It catalyses the reaction (2R,3S)-3-isopropylmalate = (2S)-2-isopropylmalate. Its pathway is amino-acid biosynthesis; L-leucine biosynthesis; L-leucine from 3-methyl-2-oxobutanoate: step 2/4. In terms of biological role, catalyzes the isomerization between 2-isopropylmalate and 3-isopropylmalate, via the formation of 2-isopropylmaleate. This is 3-isopropylmalate dehydratase large subunit from Escherichia coli O127:H6 (strain E2348/69 / EPEC).